The chain runs to 3253 residues: tRNA nuclease CdiA (3253 aa).

A signal peptide spans 1-32 (MHQPPVRFPYRLLSYLISTIIAGQPLLPAVGA). Residues 36-322 (PQNGAGMDKA…AGGNLSVTGT (287 aa)) form a two-partner system transport domain (TPS) region. The segment at 351–1384 (GELTAGQNAM…ITIRTGHLLN (1034 aa)) is FHA-1. The tract at residues 1385–1656 (QREGINETKS…DLASGIVEGN (272 aa)) is receptor binding domain (RBD). The interval 1657–1841 (YPLPSGNNGY…LSPKDVTLQN (185 aa)) is YP domain. The interval 1842–1902 (GSIISGQNVH…GLKAMGDINN (61 aa)) is periplasmic FHA-1 repeat (pFR). The tract at residues 1944 to 2548 (TYTGSIASVS…TSKYDSKQTS (605 aa)) is FHA-2. 4 disordered regions span residues 2228 to 2252 (GSSK…TIGS), 2362 to 2410 (TGDP…GKNR), 2483 to 2503 (GSEK…GKTV), and 2687 to 2712 (IRDR…DSIS). 3 stretches are compositionally biased toward polar residues: residues 2240–2252 (GTTQ…TIGS), 2368–2403 (TGVS…NLSV), and 2490–2503 (TEWT…GKTV). The pretoxin (PT) domain stretch occupies residues 2888–2930 (SDLSEEQKQTISTLATVSAGLAGGLTGNSSASAAVGAQSGKNA). The VDNN CT cleavage motif motif lies at 2931-2934 (VDNN). The interval 2931-3253 (VDNNYLSVSE…TGIVSNFHPK (323 aa)) is C-terminal effector domain (CT).

This sequence in the N-terminal section; belongs to the CdiA toxin family. The protein in the C-terminal section; belongs to the bacterial EndoU family. As to quaternary structure, forms a 1:1 complex with cognate immunity protein CdiI-STECO31. TRNase activity is metal-independent. serves as cofactor. The CT domain is cleaved upon binding to receptor Tsx on target cells.

Its subcellular location is the secreted. It is found in the target cell. The protein localises to the target cell cytoplasm. Toxic component of a toxin-immunity protein module, which functions as a cellular contact-dependent growth inhibition (CDI) system. CDI modules allow bacteria to communicate with and inhibit the growth of closely related neighboring target bacteria in a contact-dependent fashion (target cell counts decrease 1000- to 10000-fold with this CDI). Uses outer membrane nucleoside transporter Tsx on target cells as a receptor. Gains access to the cytoplasm of target cells by using integral inner membrane protein PTS system glucose-specific EIICB component (ptsG). Targeting of the C-terminal domain (CT) domain (residues 2931-3253) in the absence of immunity protein inhibits cell growth and causes tRNA(UUC-Glu) cleavage; expression of cognate immunity protein CdiI-STECO31 neutralizes growth inhibition leaving tRNA(UUC-Glu) is intact, whereas non-cognate immunity proteins do not confer protection. The CT domain cleaves tRNA; it is most active against tRNA(UUC-Glu), but also has modest activity against tRNA(GUC-Asp), tRNA(UUG-Gln), tRNA(CCC-Gly), tRNA(UCC-Gly), tRNA(GCC-Gly), tRNA(UUU-Lys), tRNA(GGU-Thr) and tRNA(CCA-Trp); tRNA cleavage is inhibited by cognate immunity protein CdiI. Cleavage of tRNA(UUC-Glu) occurs in the anticodon loop between cytosine(37) and 2-methyladenosine(38) (C37-m2A38) and probably also occurs in the anticodon loop of other tRNAs as well. Its function is as follows. The CdiA protein is thought to be exported from the cell through the central lumen of CdiB, the other half of its two-partner system (TPS). The TPS domain probably remains associated with CdiB while the FHA-1 domain forms an extended filament (33 nm long) with the receptor-binding domain (RBD) at its extremity; in the secretion arrested state the C-terminus of the RBD and YP domains form a hairpin-like structure as the FHA-2, PT and CT domains are periplasmic. The YP domain is probably responsible for this arrest at the point where it re-enters the host cell periplasm. Upon binding to a target cell outer membrane receptor (Tsx for this CDI) a signal is transmitted to activate secretion. The filament becomes about 5 nm longer, the rest of CdiA is secreted and the FHA-2 domain becomes stably associated with the target cell's outer membrane where it facilitates entry of the toxic CT domain into the target cell periplasm. From there the toxic CT domain is cleaved and gains access to the target cell cytoplasm via an inner membrane protein (PTS system glucose-specific EIICB component, ptsG for this CDI). This chain is tRNA nuclease CdiA, found in Escherichia coli (strain STEC_O31).